Here is a 323-residue protein sequence, read N- to C-terminus: NADH-ubiquinone oxidoreductase chain 1 (323 aa).

8 helical membrane-spanning segments follow: residues 8–28 (LINP…LTLI), 75–95 (MFLI…APLP), 105–125 (LGIL…LGSG), 151–171 (LGLI…TTLM), 177–197 (MWLI…TLAE), 234–254 (ANIL…SSFM), 258–278 (ELTT…FLWV), and 298–318 (FLPI…SMLG).

Belongs to the complex I subunit 1 family. As to quaternary structure, core subunit of respiratory chain NADH dehydrogenase (Complex I) which is composed of 45 different subunits.

The protein resides in the mitochondrion inner membrane. The enzyme catalyses a ubiquinone + NADH + 5 H(+)(in) = a ubiquinol + NAD(+) + 4 H(+)(out). Its function is as follows. Core subunit of the mitochondrial membrane respiratory chain NADH dehydrogenase (Complex I) which catalyzes electron transfer from NADH through the respiratory chain, using ubiquinone as an electron acceptor. Essential for the catalytic activity and assembly of complex I. This is NADH-ubiquinone oxidoreductase chain 1 (mt-nd1) from Xenopus laevis (African clawed frog).